A 528-amino-acid polypeptide reads, in one-letter code: MGDGLTPEGKAQLITRNLQEVLGEDKMKEILKERPLRIYWGTATTGKPHVAYFVPMSKIADFLKAGCEVTILFADLHAYLDNMKAPWDLLELRTRYYEQVIQAMLQSIGVPLERLRFIRGTEFQLSKEYTLDVYRLSSVVTQHDAKKAGAEVVKQVEHPLLSGLLYPGLQALDEEYLKVDAQFGGVDQRKIFTFAEKYLPALGYAKRIHLMNPMVPGLTGAKMSSSEEESKIDLLDSPADVKKKLKKAFCEPGNIENNGVLSFVRHVLFPLKSEFVVLRDEKFGGNKTYTDFETLEKDFTEQLVHPGDLKASVEKALNKLLDPIREKFNSPEMKKLSNDAYPGASKQKTVPKGSTKNSGPEEIDPSLLDLRVGKILSVRQHPDADSLYVESVDVGEENPRCVVSGLVQYVPSDQLLGRSVVLLCNLKPQKMRGIESQGMLLCASTEGEQKQVEPLDPPTGSAPGERIYIEGYENGEPEGELKPKKKVFEKLQVDFRISDDLCAQWKGKNFLTKLGSVTCKTLRGGSIS.

Y39 provides a ligand contact to L-tyrosine. A 'HIGH' region motif is present at residues 44 to 52; sequence TTGKPHVAY. Residues Y166, Q170, D173, and Q188 each contribute to the L-tyrosine site. The 'KMSKS' region signature appears at 222–226; the sequence is KMSSS. The Nuclear localization signal motif lies at 242–247; sequence KKKLKK. Residues 335–364 form a disordered region; that stretch reads KLSNDAYPGASKQKTVPKGSTKNSGPEEID. Residues 346–358 show a composition bias toward polar residues; sequence KQKTVPKGSTKNS. The 105-residue stretch at 364 to 468 folds into the tRNA-binding domain; that stretch reads DPSLLDLRVG…TGSAPGERIY (105 aa).

This sequence belongs to the class-I aminoacyl-tRNA synthetase family. As to quaternary structure, homodimer.

It localises to the cytoplasm. The protein resides in the nucleus. It catalyses the reaction tRNA(Tyr) + L-tyrosine + ATP = L-tyrosyl-tRNA(Tyr) + AMP + diphosphate + H(+). Catalyzes the attachment of tyrosine to tRNA(Tyr) in a two-step reaction: tyrosine is first activated by ATP to form Tyr-AMP and then transferred to the acceptor end of tRNA(Tyr). This chain is Tyrosine--tRNA ligase, cytoplasmic (yars1), found in Xenopus tropicalis (Western clawed frog).